Consider the following 311-residue polypeptide: tRNA dimethylallyltransferase (311 aa).

Residue 9–16 (GPTAVGKT) coordinates ATP. 11 to 16 (TAVGKT) lines the substrate pocket. An interaction with substrate tRNA region spans residues 34–37 (DSMQ).

Belongs to the IPP transferase family. As to quaternary structure, monomer. Requires Mg(2+) as cofactor.

The enzyme catalyses adenosine(37) in tRNA + dimethylallyl diphosphate = N(6)-dimethylallyladenosine(37) in tRNA + diphosphate. Catalyzes the transfer of a dimethylallyl group onto the adenine at position 37 in tRNAs that read codons beginning with uridine, leading to the formation of N6-(dimethylallyl)adenosine (i(6)A). This Clostridium botulinum (strain Hall / ATCC 3502 / NCTC 13319 / Type A) protein is tRNA dimethylallyltransferase.